Reading from the N-terminus, the 354-residue chain is Peptide chain release factor 1 (354 aa).

Glutamine 231 carries the post-translational modification N5-methylglutamine.

It belongs to the prokaryotic/mitochondrial release factor family. Post-translationally, methylated by PrmC. Methylation increases the termination efficiency of RF1.

It localises to the cytoplasm. Functionally, peptide chain release factor 1 directs the termination of translation in response to the peptide chain termination codons UAG and UAA. The sequence is that of Peptide chain release factor 1 from Acholeplasma laidlawii (strain PG-8A).